Reading from the N-terminus, the 239-residue chain is 1-(5-phosphoribosyl)-5-[(5-phosphoribosylamino)methylideneamino] imidazole-4-carboxamide isomerase (239 aa).

D8 serves as the catalytic Proton acceptor. The active-site Proton donor is D129.

The protein belongs to the HisA/HisF family.

The protein localises to the cytoplasm. It carries out the reaction 1-(5-phospho-beta-D-ribosyl)-5-[(5-phospho-beta-D-ribosylamino)methylideneamino]imidazole-4-carboxamide = 5-[(5-phospho-1-deoxy-D-ribulos-1-ylimino)methylamino]-1-(5-phospho-beta-D-ribosyl)imidazole-4-carboxamide. The protein operates within amino-acid biosynthesis; L-histidine biosynthesis; L-histidine from 5-phospho-alpha-D-ribose 1-diphosphate: step 4/9. In Cereibacter sphaeroides (strain ATCC 17025 / ATH 2.4.3) (Rhodobacter sphaeroides), this protein is 1-(5-phosphoribosyl)-5-[(5-phosphoribosylamino)methylideneamino] imidazole-4-carboxamide isomerase.